A 185-amino-acid chain; its full sequence is Elongation factor P (185 aa).

The protein belongs to the elongation factor P family.

The protein localises to the cytoplasm. Its pathway is protein biosynthesis; polypeptide chain elongation. In terms of biological role, involved in peptide bond synthesis. Stimulates efficient translation and peptide-bond synthesis on native or reconstituted 70S ribosomes in vitro. Probably functions indirectly by altering the affinity of the ribosome for aminoacyl-tRNA, thus increasing their reactivity as acceptors for peptidyl transferase. This is Elongation factor P from Oceanobacillus iheyensis (strain DSM 14371 / CIP 107618 / JCM 11309 / KCTC 3954 / HTE831).